A 380-amino-acid chain; its full sequence is Outer membrane protein 40 (380 aa).

The N-terminal stretch at 1–21 is a signal peptide; the sequence is MKAKSLLLALAGLACTFSATA. Glutamine 22 is modified (pyrrolidone carboxylic acid). The OmpA-like domain maps to 270 to 380; sequence PTVTRVVVDN…NRIVVMTAAE (111 aa).

The protein belongs to the outer membrane OOP (TC 1.B.6) superfamily. In terms of assembly, disulfide-linked heterodimer with Omp41.

It is found in the cell outer membrane. Functionally, may have porin activity and function in peptidoglycan binding. This is Outer membrane protein 40 from Porphyromonas gingivalis (strain ATCC BAA-308 / W83).